Reading from the N-terminus, the 209-residue chain is Small ribosomal subunit protein eS1 (209 aa).

It belongs to the eukaryotic ribosomal protein eS1 family.

This is Small ribosomal subunit protein eS1 from Picrophilus torridus (strain ATCC 700027 / DSM 9790 / JCM 10055 / NBRC 100828 / KAW 2/3).